A 548-amino-acid polypeptide reads, in one-letter code: Glycosyl hydrolase family 109 protein 3 (548 aa).

Positions 1 to 21 (MKLKKLLLSVLMLLSISGLQA) are cleaved as a signal peptide. NAD(+) contacts are provided by residues 71-72 (MR), Asp-93, 141-144 (WNHH), 161-162 (EV), and Asn-190. A substrate-binding site is contributed by Tyr-219. 240–244 (DNLHW) serves as a coordination point for NAD(+). Residues Arg-245, 257 to 260 (YATH), and Tyr-335 contribute to the substrate site. Tyr-257 contributes to the NAD(+) binding site.

It belongs to the Gfo/Idh/MocA family. Glycosyl hydrolase 109 subfamily. The cofactor is NAD(+).

Its function is as follows. Glycosidase. The sequence is that of Glycosyl hydrolase family 109 protein 3 from Phocaeicola vulgatus (strain ATCC 8482 / DSM 1447 / JCM 5826 / CCUG 4940 / NBRC 14291 / NCTC 11154) (Bacteroides vulgatus).